Here is a 320-residue protein sequence, read N- to C-terminus: MAQEPSFFVLAYYHFTAIADPHQEVKAHKEFFKDRNITSRIYLSEQGINGQMSGKREDAEAYMKWLHANPLFETMPFKIHSHHENVFPRQTVKYRKQLVALDEDVDMNQTGQHISPLEWKELLEKEKRPLLLDVRNEYEWQVGRFDGAECPPCDTFREFKEYAENLKTQVNPEQTPIMMYCTGGIRCELYSSLLKKEGFKEVYQLEGGIINYGLKQGSEHWLGKLFVFDDRLTIPISQEPAPVIGSCHHCQTSNETYYNCANMDCNHLYLCCQTCVEKFLGCCCTDCQNAPRVRPYHHQDVHKPFRKRHHYFKDDLTSKQ.

A Rhodanese domain is found at 125 to 221; sequence KEKRPLLLDV…YGLKQGSEHW (97 aa). Cys181 (cysteine persulfide intermediate) is an active-site residue.

The protein belongs to the TrhO family.

It carries out the reaction uridine(34) in tRNA + AH2 + O2 = 5-hydroxyuridine(34) in tRNA + A + H2O. Functionally, catalyzes oxygen-dependent 5-hydroxyuridine (ho5U) modification at position 34 in tRNAs. This chain is tRNA uridine(34) hydroxylase, found in Protochlamydia amoebophila (strain UWE25).